We begin with the raw amino-acid sequence, 159 residues long: Large ribosomal subunit protein uL11 (159 aa).

The interval 1–26 (MAGTIEVLVPGGKANPGPPLGPELGP) is disordered.

This sequence belongs to the universal ribosomal protein uL11 family. In terms of assembly, part of the ribosomal stalk of the 50S ribosomal subunit. Interacts with L10 and the large rRNA to form the base of the stalk. L10 forms an elongated spine to which L12 dimers bind in a sequential fashion forming a multimeric L10(L12)X complex.

Forms part of the ribosomal stalk which helps the ribosome interact with GTP-bound translation factors. The chain is Large ribosomal subunit protein uL11 from Haloferax volcanii (strain ATCC 29605 / DSM 3757 / JCM 8879 / NBRC 14742 / NCIMB 2012 / VKM B-1768 / DS2) (Halobacterium volcanii).